The following is a 284-amino-acid chain: F-box protein PP2-B13 (284 aa).

In terms of domain architecture, F-box spans 1–44; it reads MMMLPEACVANILAFTSPADAFSSSEVSSVFRLAGDSDFVWEKF.

The sequence is that of F-box protein PP2-B13 (PP2B13) from Arabidopsis thaliana (Mouse-ear cress).